The sequence spans 140 residues: Large ribosomal subunit protein uL14 (140 aa).

It belongs to the universal ribosomal protein uL14 family. As to quaternary structure, part of the 50S ribosomal subunit. Forms a cluster with proteins L3 and L24e, part of which may contact the 16S rRNA in 2 intersubunit bridges.

Binds to 23S rRNA. Forms part of two intersubunit bridges in the 70S ribosome. This chain is Large ribosomal subunit protein uL14, found in Aeropyrum pernix (strain ATCC 700893 / DSM 11879 / JCM 9820 / NBRC 100138 / K1).